Consider the following 203-residue polypeptide: Outer-membrane lipoprotein LolB (203 aa).

The signal sequence occupies residues 1-22 (MPVNLNHTLLLCLLVAASLLSG). Cysteine 23 carries N-palmitoyl cysteine lipidation. Cysteine 23 is lipidated: S-diacylglycerol cysteine.

It belongs to the LolB family. Monomer.

The protein localises to the cell outer membrane. Functionally, plays a critical role in the incorporation of lipoproteins in the outer membrane after they are released by the LolA protein. This is Outer-membrane lipoprotein LolB from Shewanella denitrificans (strain OS217 / ATCC BAA-1090 / DSM 15013).